A 267-amino-acid polypeptide reads, in one-letter code: Trehalose 2-sulfotransferase (267 aa).

Alpha,alpha-trehalose is bound by residues Q14, E33 to Q39, P48, and W53. The Proton acceptor role is filled by E36.

This sequence belongs to the Stf0 sulfotransferase family. In terms of assembly, homodimer.

The catalysed reaction is alpha,alpha-trehalose + 3'-phosphoadenylyl sulfate = 2-O-sulfo-alpha,alpha-trehalose + adenosine 3',5'-bisphosphate + H(+). The protein operates within glycolipid metabolism. Catalyzes the sulfuryl group transfer from 3'-phosphoadenosine-5'-phosphosulfate (PAPS) to trehalose, leading to trehalose-2-sulfate (T2S). The sulfation of trehalose is the first step in the biosynthesis of sulfolipid-1 (SL-1), a major cell wall glycolipid in pathogenic mycobacteria. Cannot use free glucose and unnatural stereoisomers of trehalose (alpha,beta (neo-trehalose) and beta,beta (iso-trehalose)) as substrates. This Mycolicibacterium smegmatis (strain ATCC 700084 / mc(2)155) (Mycobacterium smegmatis) protein is Trehalose 2-sulfotransferase.